A 415-amino-acid chain; its full sequence is AP-3 complex subunit mu (415 aa).

Residues 178-414 (SNEVYVDLVE…QTRAGEFDVR (237 aa)) enclose the MHD domain.

It belongs to the adaptor complexes medium subunit family. As to quaternary structure, adaptor protein complex 3 (AP-3) is a heterotetramer composed of two large adaptins (delta-type subunit and beta-type subunit), a medium adaptin (mu-type subunit) and a small adaptin (sigma-type subunit).

The protein localises to the cytoplasm. It localises to the golgi apparatus. It is found in the cytoplasmic vesicle membrane. In terms of biological role, part of the AP-3 complex, an adaptor-related complex which seems to be clathrin-associated. The complex is associated with the Golgi region as well as more peripheral structures. It facilitates the budding of vesicles from the Golgi membrane and may be directly involved in trafficking to the vacuole. It also functions in maintaining the identity of lytic vacuoles and in regulating the transition between storage and lytic vacuoles. The protein is AP-3 complex subunit mu (AP3M) of Arabidopsis thaliana (Mouse-ear cress).